The primary structure comprises 480 residues: Glycerol 3-phosphate dehydrogenase (480 aa).

FAD-binding positions include I12, E31, 40–41, and 45–47; these read TT and SAI. Sn-glycerol 3-phosphate-binding residues include S45 and H49. Residue H49 is the Proton acceptor of the active site. V172 contributes to the FAD binding site. The sn-glycerol 3-phosphate site is built by K249 and R310. Residue 335–336 participates in FAD binding; it reads IE. S337 contributes to the sn-glycerol 3-phosphate binding site. FAD is bound at residue S341. Residues C400, C402, C437, and C442 each coordinate [2Fe-2S] cluster.

[2Fe-2S] cluster is required as a cofactor.

It carries out the reaction sn-glycerol 3-phosphate + A = dihydroxyacetone phosphate + AH2. It participates in polyol metabolism; glycerol degradation via glycerol kinase pathway; glycerone phosphate from sn-glycerol 3-phosphate (aerobic route): step 1/1. Its function is as follows. Catalyzes the dehydrogenation of glycerol 3-phosphate to dihydroxyacetone phosphate. Is probably involved in anaerobic glycerol metabolism. Active in vitro with the artificial electron acceptor 2,6-dichlorophenolindophenol (DCPIP), but not with NAD or NADP. Also displays a very low oxidase activity in vitro on glycerol 3-phosphate with O2 as the electron acceptor, but this activity is most likely not physiological. The protein is Glycerol 3-phosphate dehydrogenase of Caloramator mitchellensis.